Reading from the N-terminus, the 770-residue chain is Probable copper-exporting P-type ATPase V (770 aa).

The HMA domain maps to 1-66 (MRVCVTGFNV…AITKAQHVPA (66 aa)). The segment at 103 to 130 (DKPLKASRCGGRPRGPVRGSASWPGEQN) is disordered. Over residues 110–121 (RCGGRPRGPVRG) the composition is skewed to low complexity. The next 6 membrane-spanning stretches (helical) occupy residues 141-161 (VWLA…FGAY), 164-184 (AGWL…WPIL), 193-213 (ALTS…FVYS), 217-237 (LFAG…FVVL), 377-397 (AVFV…WTLI), and 402-422 (VAGM…ALGL). Asp460 functions as the 4-aspartylphosphate intermediate in the catalytic mechanism. Positions 660 and 664 each coordinate Mg(2+). The next 2 membrane-spanning stretches (helical) occupy residues 718-737 (LGWA…LGAL) and 741-760 (VAGA…SLRL).

It belongs to the cation transport ATPase (P-type) (TC 3.A.3) family. Type IB subfamily.

The protein resides in the cell membrane. It carries out the reaction Cu(+)(in) + ATP + H2O = Cu(+)(out) + ADP + phosphate + H(+). In terms of biological role, necessary for copper homeostasis and likely functions as a copper exporter. Also required for full virulence. This Mycobacterium tuberculosis (strain CDC 1551 / Oshkosh) protein is Probable copper-exporting P-type ATPase V (ctpV).